The sequence spans 363 residues: Somatostatin receptor type 5 (363 aa).

Topologically, residues 1 to 35 (MEPLSLASTPSWNASAASSGNHNWSLVGSASPMGA) are extracellular. N-linked (GlcNAc...) asparagine glycosylation is found at Asn-13 and Asn-23. The chain crosses the membrane as a helical span at residues 36–63 (RAVLVPVLYLLVCTVGLSGNTLVIYVVL). The Cytoplasmic segment spans residues 64-73 (RHAKMKTVTN). A helical membrane pass occupies residues 74 to 99 (VYILNLAVADVLFMLGLPFLATQNAV). The Extracellular portion of the chain corresponds to 100-111 (VSYWPFGSFLCR). A disulfide bond links Cys-110 and Cys-185. The helical transmembrane segment at 112–133 (LVMTLDGINQFTSIFCLMVMSV) threads the bilayer. Topologically, residues 134-155 (DRYLAVVHPLRSARWRRPRVAK) are cytoplasmic. The chain crosses the membrane as a helical span at residues 156–176 (MASAAVWVFSLLMSLPLLVFA). Residues 177–196 (DVQEGWGTCNLSWPEPVGLW) lie on the Extracellular side of the membrane. Asn-186 is a glycosylation site (N-linked (GlcNAc...) asparagine). The helical transmembrane segment at 197-221 (GAAFITYTSVLGFFGPLLVICLCYL) threads the bilayer. Residues 222–247 (LIVVKVKAAGMRVGSSRRRRSEPKVT) are Cytoplasmic-facing. Residues 248-273 (RMVVVVVLVFVGCWLPFFIVNIVNLA) traverse the membrane as a helical segment. Residues 274–283 (FTLPEEPTSA) lie on the Extracellular side of the membrane. A helical transmembrane segment spans residues 284-308 (GLYFFVVVLSYANSCANPLLYGFLS). Over 309–363 (DNFRQSFRKVLCLRRGYGMEDADAIEPRPDKSGRPQATLPTRSCEANGLMQTSRI) the chain is Cytoplasmic. Cys-320 is lipidated: S-palmitoyl cysteine; by ZDHHC5. A disordered region spans residues 331–363 (DAIEPRPDKSGRPQATLPTRSCEANGLMQTSRI).

It belongs to the G-protein coupled receptor 1 family. As to quaternary structure, heterodimer with SSTR2. Heterodimerization with SSTR2 increases cell growth inhibition activity of SSTR2. In terms of processing, palmitoylated at Cys-320 by ZDHHC5, but not ZDHHC8. Palmitoylation creates an additional intracellular loop which is thought to be important for efficient coupling to G-proteins and may target the protein to lipid rafts. Prominent in the pituitary and small intestine. Low levels in islets and spleen. Not detected in kidney, pancreas, cerebellum, or cortex.

The protein resides in the cell membrane. Receptor for somatostatin-28. The activity of this receptor is mediated by G proteins which inhibit adenylyl cyclase. Increases cell growth inhibition activity of SSTR2 following heterodimerization. The chain is Somatostatin receptor type 5 (Sstr5) from Rattus norvegicus (Rat).